Reading from the N-terminus, the 213-residue chain is Reticulon-3 (213 aa).

The span at 1 to 16 (MADTSGPQSSHISSSA) shows a compositional bias: polar residues. Positions 1 to 20 (MADTSGPQSSHISSSAGEKG) are disordered. The 189-residue stretch at 25 to 213 (VQDLLYWRDV…LPGALKKKSE (189 aa)) folds into the Reticulon domain. Helical transmembrane passes span 45–65 (MVLLLSLAAFSIISVISYLVL) and 154–174 (VFNGITLLILGVLLAFTAPIV).

In terms of assembly, homodimer.

Its subcellular location is the endoplasmic reticulum membrane. It is found in the golgi apparatus membrane. May be involved in membrane trafficking in the early secretory pathway. This chain is Reticulon-3 (rtn3), found in Xenopus tropicalis (Western clawed frog).